A 248-amino-acid chain; its full sequence is 4-hydroxy-tetrahydrodipicolinate reductase (248 aa).

NAD(+)-binding positions include Asp32, 74 to 76 (GTT), and 99 to 102 (SANF). The active-site Proton donor/acceptor is the His134. Position 135 (His135) interacts with (S)-2,3,4,5-tetrahydrodipicolinate. Catalysis depends on Lys138, which acts as the Proton donor. A (S)-2,3,4,5-tetrahydrodipicolinate-binding site is contributed by 144–145 (GT).

The protein belongs to the DapB family.

The protein localises to the cytoplasm. It catalyses the reaction (S)-2,3,4,5-tetrahydrodipicolinate + NAD(+) + H2O = (2S,4S)-4-hydroxy-2,3,4,5-tetrahydrodipicolinate + NADH + H(+). It carries out the reaction (S)-2,3,4,5-tetrahydrodipicolinate + NADP(+) + H2O = (2S,4S)-4-hydroxy-2,3,4,5-tetrahydrodipicolinate + NADPH + H(+). Its pathway is amino-acid biosynthesis; L-lysine biosynthesis via DAP pathway; (S)-tetrahydrodipicolinate from L-aspartate: step 4/4. Functionally, catalyzes the conversion of 4-hydroxy-tetrahydrodipicolinate (HTPA) to tetrahydrodipicolinate. The protein is 4-hydroxy-tetrahydrodipicolinate reductase of Chlorobium luteolum (strain DSM 273 / BCRC 81028 / 2530) (Pelodictyon luteolum).